The chain runs to 367 residues: UDP-N-acetylglucosamine--N-acetylmuramyl-(pentapeptide) pyrophosphoryl-undecaprenol N-acetylglucosamine transferase (367 aa).

Residues 13 to 15, R168, S196, I252, and Q297 contribute to the UDP-N-acetyl-alpha-D-glucosamine site; that span reads TGG.

It belongs to the glycosyltransferase 28 family. MurG subfamily.

Its subcellular location is the cell inner membrane. It carries out the reaction di-trans,octa-cis-undecaprenyl diphospho-N-acetyl-alpha-D-muramoyl-L-alanyl-D-glutamyl-meso-2,6-diaminopimeloyl-D-alanyl-D-alanine + UDP-N-acetyl-alpha-D-glucosamine = di-trans,octa-cis-undecaprenyl diphospho-[N-acetyl-alpha-D-glucosaminyl-(1-&gt;4)]-N-acetyl-alpha-D-muramoyl-L-alanyl-D-glutamyl-meso-2,6-diaminopimeloyl-D-alanyl-D-alanine + UDP + H(+). The protein operates within cell wall biogenesis; peptidoglycan biosynthesis. Cell wall formation. Catalyzes the transfer of a GlcNAc subunit on undecaprenyl-pyrophosphoryl-MurNAc-pentapeptide (lipid intermediate I) to form undecaprenyl-pyrophosphoryl-MurNAc-(pentapeptide)GlcNAc (lipid intermediate II). The chain is UDP-N-acetylglucosamine--N-acetylmuramyl-(pentapeptide) pyrophosphoryl-undecaprenol N-acetylglucosamine transferase from Methylibium petroleiphilum (strain ATCC BAA-1232 / LMG 22953 / PM1).